The chain runs to 351 residues: Heme A synthase (351 aa).

8 helical membrane passes run 17–37 (WLILMALMVYAIILVGGATRL), 103–123 (LIGLVAVAGFAFFAWRRWLGQ), 129–149 (LVGLIALGGLQGAIGWWMVSS), 164–184 (LMTHFTLALLILAVIAWLWLD), 201–221 (AMALMGLIFVQMAAGALVAGL), 261–281 (FNHRLLAYGLWAGSLAAAWAF), 289–309 (EFAFLAVLVSAQAVWGILTLV), and 316–336 (LALVHQGLGVVTTLWAVYTVW). His-263 lines the heme pocket. Heme is bound at residue His-320.

It belongs to the COX15/CtaA family. Type 2 subfamily. In terms of assembly, interacts with CtaB. Requires heme b as cofactor.

Its subcellular location is the cell membrane. The enzyme catalyses Fe(II)-heme o + 2 A + H2O = Fe(II)-heme a + 2 AH2. It functions in the pathway porphyrin-containing compound metabolism; heme A biosynthesis; heme A from heme O: step 1/1. In terms of biological role, catalyzes the conversion of heme O to heme A by two successive hydroxylations of the methyl group at C8. The first hydroxylation forms heme I, the second hydroxylation results in an unstable dihydroxymethyl group, which spontaneously dehydrates, resulting in the formyl group of heme A. The polypeptide is Heme A synthase (Hyphomonas neptunium (strain ATCC 15444)).